A 124-amino-acid polypeptide reads, in one-letter code: Small ribosomal subunit protein uS13 (124 aa).

Residues 95-124 (GLPVRGQRTKTNARTRKGPKRTIAGKKKAR) are disordered.

This sequence belongs to the universal ribosomal protein uS13 family. As to quaternary structure, part of the 30S ribosomal subunit. Forms a loose heterodimer with protein S19. Forms two bridges to the 50S subunit in the 70S ribosome.

Located at the top of the head of the 30S subunit, it contacts several helices of the 16S rRNA. In the 70S ribosome it contacts the 23S rRNA (bridge B1a) and protein L5 of the 50S subunit (bridge B1b), connecting the 2 subunits; these bridges are implicated in subunit movement. Contacts the tRNAs in the A and P-sites. The chain is Small ribosomal subunit protein uS13 from Mycolicibacterium smegmatis (strain ATCC 700084 / mc(2)155) (Mycobacterium smegmatis).